The chain runs to 426 residues: Histidine--tRNA ligase (426 aa).

It belongs to the class-II aminoacyl-tRNA synthetase family. In terms of assembly, homodimer.

Its subcellular location is the cytoplasm. The enzyme catalyses tRNA(His) + L-histidine + ATP = L-histidyl-tRNA(His) + AMP + diphosphate + H(+). The chain is Histidine--tRNA ligase from Streptococcus pyogenes serotype M1.